The primary structure comprises 298 residues: Arginase (298 aa).

Mn(2+)-binding residues include H98, D121, H123, and D125. Substrate contacts are provided by residues 123–127 (HGDLN), 134–136 (SGN), and D177. 2 residues coordinate Mn(2+): D225 and D227. Residues T239 and E270 each coordinate substrate.

The protein belongs to the arginase family. Mn(2+) serves as cofactor.

It carries out the reaction L-arginine + H2O = urea + L-ornithine. It functions in the pathway nitrogen metabolism; urea cycle; L-ornithine and urea from L-arginine: step 1/1. This is Arginase (rocF) from Brevibacillus brevis (Bacillus brevis).